A 120-amino-acid polypeptide reads, in one-letter code: Ribonuclease P protein component (120 aa).

The protein belongs to the RnpA family. As to quaternary structure, consists of a catalytic RNA component (M1 or rnpB) and a protein subunit.

It carries out the reaction Endonucleolytic cleavage of RNA, removing 5'-extranucleotides from tRNA precursor.. RNaseP catalyzes the removal of the 5'-leader sequence from pre-tRNA to produce the mature 5'-terminus. It can also cleave other RNA substrates such as 4.5S RNA. The protein component plays an auxiliary but essential role in vivo by binding to the 5'-leader sequence and broadening the substrate specificity of the ribozyme. The protein is Ribonuclease P protein component of Thioalkalivibrio sulfidiphilus (strain HL-EbGR7).